The following is a 712-amino-acid chain: TGF-beta-activated kinase 1 and MAP3K7-binding protein 3 (712 aa).

Alanine 2 bears the N-acetylalanine mark. Residues 8-51 (LDIQVLHDLRQRFPEIPEGVVSQCMLQNNNNLEACCRALSQESS) form the CUE domain. Residues serine 60, serine 101, and serine 103 each carry the phosphoserine modification. 4 disordered regions span residues 141-189 (FMNE…HIPR), 227-345 (PGSI…KQGS), 369-447 (TVEP…SPRV), and 475-509 (ERSAAPEPIQPISVIPGSGGEKGSHKYQRSSSSGS). Polar residues predominate over residues 163–173 (MQTGMNPSAMQ). Composition is skewed to low complexity over residues 233-249 (RQTSQSSSGRQTPQSTP) and 269-290 (YPHQQNYQPSQYSPKQQQIPQS). Positions 322–332 (PPSPSTTPPHP) are enriched in pro residues. Polar residues-rich tracts occupy residues 336–345 (GPPSYQKQGS) and 371–404 (EPSQRPGTAINRSPSPISNQPSPRNQHSLYTATT). Position 385 is a phosphoserine (serine 385). Threonine 404 is modified (phosphothreonine). A compositionally biased stretch (low complexity) spans 405–417 (PPSSSPSRGISSQ). Residues serine 409 and serine 492 each carry the phosphoserine modification. Residue serine 506 is modified to Phosphoserine; by MAPKAPK2 and MAPKAPK3. Residues 517 to 559 (ALLLHQRARMERLAKQLKLEKEELERLKSEVNGMEHDLMQRRL) are a coiled coil. Residues 609–636 (MNNFYDNIEPGPVVPPKPSKKDSSDPCT) are disordered. Positions 627–636 (SKKDSSDPCT) are enriched in basic and acidic residues. Lysine 649 participates in a covalent cross-link: Glycyl lysine isopeptide (Lys-Gly) (interchain with G-Cter in ubiquitin). Residues 658–667 (QAAAADEHRT) are compositionally biased toward basic and acidic residues. The interval 658–682 (QAAAADEHRTGSTQSPRTQPRDEDY) is disordered. The RanBP2-type zinc-finger motif lies at 682–712 (YEGAPWNCDSCTFLNHPALNRCEQCEMPRYT). Position 692 is a (Microbial infection) S-methylcysteine (cysteine 692).

In terms of assembly, interacts with TAB1, TAB2, MAP3K7, TRAF2 and TRAF6. The minimal TAB3-containing complex (TAB1-MAP3K7-TAB3) appears not to contain TAB2. However, it seems sensible to consider that TAB2 may also join this complex and may act in a cooperative manner with TAB3. Interacts with DYNC2I2 (via the WD domains). Interacts with RBCK1. Binds 'Lys-63'-linked polyubiquitin chains. Interacts with TRIM5. Interacts with TRIM38 (via B30.2/SPRY domain), leading to its translocation to lysosomes and degradation. Interacts with ASB1. (Microbial infection) Interacts with M.tuberculosis PtpA, which blocks the NF-kappa-B signaling pathway. Ubiquitinated; following IL1 stimulation or TRAF6 overexpression. Ubiquitinated by AMFR via 'Lys-27'-linked polyubiquitination; leading to TAK1/MAP3K7 activation. Post-translationally, degraded in a lysosome-dependent manner following interaction with TRIM38. In terms of processing, phosphorylated at Ser-506 by MAPKAPK2 and MAPKAPK3 following IL1 treatment. (Microbial infection) Methylated at Cys-692 by enteropathogenic E.coli protein NleE or S.flexneri protein OspZ: methylation disrupts zinc-binding and ability to bind 'Lys-63'-linked ubiquitin, leading to NF-kappa-B inactivation. Widely expressed. Constitutively overexpressed in certain tumor tissues. In terms of tissue distribution, major transcript. As to expression, minor transcript.

In terms of biological role, adapter required to activate the JNK and NF-kappa-B signaling pathways through the specific recognition of 'Lys-63'-linked polyubiquitin chains by its RanBP2-type zinc finger (NZF). Acts as an adapter linking MAP3K7/TAK1 and TRAF6 to 'Lys-63'-linked polyubiquitin chains. The RanBP2-type zinc finger (NZF) specifically recognizes Lys-63'-linked polyubiquitin chains unanchored or anchored to the substrate proteins such as RIPK1/RIP1 and RIPK2: this acts as a scaffold to organize a large signaling complex to promote autophosphorylation of MAP3K7/TAK1, and subsequent activation of I-kappa-B-kinase (IKK) core complex by MAP3K7/TAK1. Functionally, may be an oncogenic factor. The sequence is that of TGF-beta-activated kinase 1 and MAP3K7-binding protein 3 from Homo sapiens (Human).